The sequence spans 449 residues: Glutathione reductase (449 aa).

The FAD site is built by Ser-15, Gly-16, Glu-35, Thr-42, Cys-43, and Lys-51. Glutathione is bound at residue Ser-15. Cys-43 and Cys-48 are disulfide-bonded. Tyr-99 is a binding site for glutathione. FAD is bound at residue Ala-115. Gly-175, Ile-178, Glu-181, Arg-198, Arg-204, and Gly-261 together coordinate NADP(+). FAD-binding residues include Asp-302 and Thr-310. Residue Ala-340 coordinates NADP(+). His-435 is a binding site for FAD. His-435 (proton acceptor) is an active-site residue.

This sequence belongs to the class-I pyridine nucleotide-disulfide oxidoreductase family. As to quaternary structure, homodimer. Requires FAD as cofactor.

It is found in the cytoplasm. It carries out the reaction 2 glutathione + NADP(+) = glutathione disulfide + NADPH + H(+). The protein operates within xenobiotic degradation; (2,4,5-trichlorophenoxy)acetate degradation. In terms of biological role, catalyzes the reduction of glutathione disulfide (GSSG) to reduced glutathione (GSH). Constitutes the major mechanism to maintain a high GSH:GSSG ratio in the cytosol. In Burkholderia cepacia (Pseudomonas cepacia), this protein is Glutathione reductase (gor).